We begin with the raw amino-acid sequence, 514 residues long: Na(+)/H(+) antiporter NhaB (514 aa).

Transmembrane regions (helical) follow at residues 23–43, 63–83, 97–117, 120–140, 144–164, 202–222, 238–258, 303–323, 357–377, 391–411, 447–467, and 475–495; these read LALI…PFVA, PLLP…TSAA, LLLM…LFIF, LLLS…AAAF, FLDA…FYGI, LMMH…VGEP, FFLR…FTCV, AIIG…VGLI, LTVF…APII, LFYL…VGTI, ATPN…APLI, and VWMA…CVEF.

It belongs to the NhaB Na(+)/H(+) (TC 2.A.34) antiporter family.

The protein localises to the cell inner membrane. It catalyses the reaction 2 Na(+)(in) + 3 H(+)(out) = 2 Na(+)(out) + 3 H(+)(in). Its function is as follows. Na(+)/H(+) antiporter that extrudes sodium in exchange for external protons. This chain is Na(+)/H(+) antiporter NhaB, found in Citrobacter koseri (strain ATCC BAA-895 / CDC 4225-83 / SGSC4696).